A 241-amino-acid polypeptide reads, in one-letter code: Adenosylcobinamide-GDP ribazoletransferase (241 aa).

7 consecutive transmembrane segments (helical) span residues 34–54 (RIPA…FTGS), 55–75 (FLSL…GFYL), 109–129 (VGPF…ELIT), 133–153 (PVAF…VLVF), 165–185 (MLFP…LPLL), 186–206 (LIDV…GFLI), and 221–241 (VLGG…NYLI).

This sequence belongs to the CobS family. Mg(2+) is required as a cofactor.

The protein localises to the cell inner membrane. It carries out the reaction alpha-ribazole + adenosylcob(III)inamide-GDP = adenosylcob(III)alamin + GMP + H(+). The enzyme catalyses alpha-ribazole 5'-phosphate + adenosylcob(III)inamide-GDP = adenosylcob(III)alamin 5'-phosphate + GMP + H(+). The protein operates within cofactor biosynthesis; adenosylcobalamin biosynthesis; adenosylcobalamin from cob(II)yrinate a,c-diamide: step 7/7. In terms of biological role, joins adenosylcobinamide-GDP and alpha-ribazole to generate adenosylcobalamin (Ado-cobalamin). Also synthesizes adenosylcobalamin 5'-phosphate from adenosylcobinamide-GDP and alpha-ribazole 5'-phosphate. The protein is Adenosylcobinamide-GDP ribazoletransferase of Fervidobacterium nodosum (strain ATCC 35602 / DSM 5306 / Rt17-B1).